The primary structure comprises 893 residues: UPF0182 protein CLD_0809 (893 aa).

7 consecutive transmembrane segments (helical) span residues 9–29 (IPLF…NFII), 49–69 (AIII…WMYY), 94–114 (LFFI…SSSY), 154–174 (VIIS…FILE), 202–222 (LAIV…IKIW), 246–266 (FYKI…LSIV), and 273–293 (VSIC…ASFL).

The protein belongs to the UPF0182 family.

Its subcellular location is the cell membrane. The polypeptide is UPF0182 protein CLD_0809 (Clostridium botulinum (strain Okra / Type B1)).